The primary structure comprises 366 residues: tRNA pseudouridine synthase B (366 aa).

Residue aspartate 44 is the Nucleophile of the active site.

The protein belongs to the pseudouridine synthase TruB family. Type 1 subfamily.

The enzyme catalyses uridine(55) in tRNA = pseudouridine(55) in tRNA. Functionally, responsible for synthesis of pseudouridine from uracil-55 in the psi GC loop of transfer RNAs. The chain is tRNA pseudouridine synthase B from Treponema pallidum (strain Nichols).